An 81-amino-acid chain; its full sequence is MRNATFFIVFYVFISLVLSNVQDVTAQKNKCMRSEMFPTGPCGNNGEETCKKDFKNIYRTPIQCKCLDKYDFARLCDCRFC.

The signal sequence occupies residues 1–26; it reads MRNATFFIVFYVFISLVLSNVQDVTA. Cystine bridges form between Cys31/Cys81, Cys42/Cys66, Cys50/Cys76, and Cys64/Cys78.

Belongs to the DEFL family. As to expression, expressed in microspores and in young and mature anthers.

Its subcellular location is the secreted. Its function is as follows. Involved in self-incompatibility. In Arabidopsis lyrata (Lyre-leaved rock-cress), this protein is Defensin-like protein b (SCRb-1).